A 520-amino-acid polypeptide reads, in one-letter code: Aspartate-proton symporter (520 aa).

14 helical membrane passes run 13-33, 49-69, 85-105, 130-150, 161-181, 201-221, 232-252, 281-301, 345-365, 366-386, 402-422, 425-445, 460-480, and 482-502; these read LFDLILIGMGAIFGSAWLFAV, ILGGAIILLIGLVYAELGAAL, HLVGYLISFVTIVAYTSLISI, TISGWILQFALLCLFFLLNYW, IISIFKYIVPITIIIVLIFHF, AAISTGGVMFAYLGLHPIVSV, IPIALIICIIVSTIIYTVLQV, IAVMLGLGWLATLVILDAILS, WLSFALSIFWTLPFPSWNALV, NVCSVALILSYAIAPISSAAL, MSIIGPLSFIFTAFIVYWSGW, VSWLLGSQLVMFLIYLCFSKY, AWWLIGFYIMMLIFSYIGSFG, and GLGIISNPVDLILVAIGSLAI.

This sequence belongs to the amino acid-polyamine-organocation (APC) superfamily. AGT (TC 2.A.3.11) family.

Its subcellular location is the cell membrane. In terms of biological role, uptake of L-aspartate with the concomitant import of a proton. Can also transport aspartate hydroxamate and L-glutamate with lower affinity and efficiency. The chain is Aspartate-proton symporter (yveA) from Bacillus subtilis (strain 168).